A 564-amino-acid polypeptide reads, in one-letter code: MQAARKRWPPSVAFWSPSPKHYVRVDRDSLRETRRLASSLRRNALAARVARVKAGMLRAELGNLSQLQIAHAHGVLADLARLEQATALHVAGDGRGSGNPPTSPGQGHPLSWGNSDSHGGGGGPGGGGGGELLITISPDGPTFSVKDDFRTEFISGLYTRQSQWLPFYGPWYAAMTDSAMQRRVFPKELKGNVNFQNSTSLKLMTGLLEVLASATEDFYTDGRNLSDVNAALCLLNGYYCLRTPAPLPSTYGELLADLDKKMEFLIADLKRDASNTDFSFAFSNPRQLETVAPLNRQGAYAPDFFGRHKMFAVMSDAGMFPNTKQTAASAQDPGARDIVYLITNAVFGENVPPFITYQLNLRTGLKALELLIVVYIVLENAHVQHNTVNRRLQLPALLGDQYKRPAAQRPQPQQPAAMFKKGFLFSFVVKNYMVPVLTRRPQTPASSLFPGAVLLALETADAASAGGGSGQTLGGHLINLSGKKYDQLFDVLNQKLTFRDVQGLIGAQTALRLTLERGLNLLLSKPSPLTSATEVISTQFGGGDDYDSLYFLILGCLPVTMAVV.

The tract at residues 1–45 (MQAARKRWPPSVAFWSPSPKHYVRVDRDSLRETRRLASSLRRNAL) is interaction with major capsid protein/MCP. The disordered stretch occupies residues 91–133 (AGDGRGSGNPPTSPGQGHPLSWGNSDSHGGGGGPGGGGGGELL). Residues 118 to 131 (HGGGGGPGGGGGGE) are compositionally biased toward gly residues.

The protein belongs to the herpesviridae CVC2 protein family. In terms of assembly, heterodimerizes with CVC1. Interacts with major capsid protein/MCP and triplex capsid protein 1/TRX1 at the pentamer vertices. Interacts with the large tegument protein/LTP.

Its subcellular location is the virion. The protein localises to the host nucleus. Functionally, capsid vertex-specific component that plays a role during viral DNA encapsidation, assuring correct genome cleavage and presumably stabilizing capsids that contain full-length viral genomes. Participates in the interaction between the capsid and the tegument through interaction with the large tegument protein/LTP. This chain is Capsid vertex component 2, found in Equus caballus (Horse).